The sequence spans 292 residues: MNNHFKCIGIVGHPRHPTALTTHEMLYRWLCTKGYEVIVEQQIAHELQLKNVKTGTLAEIGQLADLAVVVGGDGNMLGAARTLARYDIKVIGINRGNLGFLTDLDPDNAQQQLADVLEGHYISEKRFLLEAQVCQQDCQKRISTAINEVVLHPGKVAHMIEFEVYIDEIFAFSQRSDGLIISTPTGSTAYSLSAGGPILTPSLDAITLVPMFPHTLSARPLVINSSSTIRLRFSHRRNDLEISCDSQIALPIQEGEDVLIRRCDYHLNLIHPKDYSYFNTLSTKLGWSKKLF.

Asp-73 acts as the Proton acceptor in catalysis. NAD(+) contacts are provided by residues 73-74 (DG), 147-148 (NE), His-158, Arg-175, Asp-177, 188-193 (TAYSLS), and Gln-247.

Belongs to the NAD kinase family. Requires a divalent metal cation as cofactor.

Its subcellular location is the cytoplasm. The catalysed reaction is NAD(+) + ATP = ADP + NADP(+) + H(+). Involved in the regulation of the intracellular balance of NAD and NADP, and is a key enzyme in the biosynthesis of NADP. Catalyzes specifically the phosphorylation on 2'-hydroxyl of the adenosine moiety of NAD to yield NADP. The protein is NAD kinase of Shigella boydii serotype 18 (strain CDC 3083-94 / BS512).